A 492-amino-acid polypeptide reads, in one-letter code: Protein adenylyltransferase Fic (492 aa).

Residues 1-17 (MCMEAEPPSPPAQQQEQ) are compositionally biased toward low complexity. The tract at residues 1–21 (MCMEAEPPSPPAQQQEQVNPP) is disordered. Residues 33–55 (LYRLVLLFVAGSLAAWTFHALSS) traverse the membrane as a helical segment. TPR repeat units lie at residues 118–151 (ALGA…APRH) and 152–186 (PEVL…SPSN). Residues 243–248 (SVGIEG) carry the Inhibitory (S/T)XXXE(G/N) motif motif. Residues glutamate 247 and 328–331 (VGGH) each bind ATP. Residues 297–432 (ITIKDILELH…IRPFVRFIAD (136 aa)) form the Fido domain. Histidine 375 is an active-site residue. ATP is bound by residues 379–386 (DGNGRTSR), 411–412 (YY), and asparagine 419.

Belongs to the fic family. As to quaternary structure, homodimer.

It localises to the membrane. The catalysed reaction is L-tyrosyl-[protein] + ATP = O-(5'-adenylyl)-L-tyrosyl-[protein] + diphosphate. It carries out the reaction L-threonyl-[protein] + ATP = 3-O-(5'-adenylyl)-L-threonyl-[protein] + diphosphate. It catalyses the reaction 3-O-(5'-adenylyl)-L-threonyl-[protein] + H2O = L-threonyl-[protein] + AMP + H(+). The side chain of Glu-247 determines which of the two opposing activities (AMPylase or de-AMPylase) will take place. In response to endoplasmic reticulum stress, mediates de-AMPylase activity. Adenylyltransferase activity is inhibited by the inhibitory helix present at the N-terminus: Glu-247 binds ATP and competes with ATP-binding at Arg-386, thereby preventing adenylyltransferase activity. In unstressed cells, disengagement of Glu-247 promotes adenylyltransferase activity. Activation dissociates ATP-binding from Glu-247, allowing ordered binding of the entire ATP moiety with the alpha-phosphate in an orientation that is productive for accepting an incoming target hydroxyl side chain. In terms of biological role, protein that can both mediate the addition of adenosine 5'-monophosphate (AMP) to specific residues of target proteins (AMPylation), and the removal of the same modification from target proteins (de-AMPylation), depending on the context. The side chain of Glu-247 determines which of the two opposing activities (AMPylase or de-AMPylase) will take place. Acts as a key regulator of the unfolded protein response (UPR) by mediating AMPylation or de-AMPylation of Hsc70-3/BiP. In unstressed cells, acts as an adenylyltransferase by mediating AMPylation of Hsc70-3/BiP at 'Thr-518', thereby inactivating it. In response to endoplasmic reticulum stress, acts as a phosphodiesterase by mediating removal of ATP (de-AMPylation) from Hsc70-3/BiP at 'Thr-518', leading to restore HSPA5/BiP activity. This chain is Protein adenylyltransferase Fic, found in Drosophila simulans (Fruit fly).